A 147-amino-acid polypeptide reads, in one-letter code: Phosphoribosyl-AMP cyclohydrolase (147 aa).

Aspartate 91 lines the Mg(2+) pocket. Cysteine 92 lines the Zn(2+) pocket. Residues aspartate 93 and aspartate 95 each coordinate Mg(2+). Positions 108 and 115 each coordinate Zn(2+).

Belongs to the PRA-CH family. In terms of assembly, homodimer. It depends on Mg(2+) as a cofactor. Requires Zn(2+) as cofactor.

It is found in the cytoplasm. It carries out the reaction 1-(5-phospho-beta-D-ribosyl)-5'-AMP + H2O = 1-(5-phospho-beta-D-ribosyl)-5-[(5-phospho-beta-D-ribosylamino)methylideneamino]imidazole-4-carboxamide. It participates in amino-acid biosynthesis; L-histidine biosynthesis; L-histidine from 5-phospho-alpha-D-ribose 1-diphosphate: step 3/9. Its function is as follows. Catalyzes the hydrolysis of the adenine ring of phosphoribosyl-AMP. The chain is Phosphoribosyl-AMP cyclohydrolase from Rhodopseudomonas palustris (strain BisB5).